Reading from the N-terminus, the 349-residue chain is Fructose-bisphosphate aldolase 2, chloroplastic (349 aa).

Residues R47 and K137 each coordinate substrate. The active-site Proton acceptor is E177. Residue K219 is the Schiff-base intermediate with dihydroxyacetone-P of the active site.

It belongs to the class I fructose-bisphosphate aldolase family.

Its subcellular location is the plastid. It localises to the chloroplast. The catalysed reaction is beta-D-fructose 1,6-bisphosphate = D-glyceraldehyde 3-phosphate + dihydroxyacetone phosphate. Its pathway is carbohydrate degradation; glycolysis; D-glyceraldehyde 3-phosphate and glycerone phosphate from D-glucose: step 4/4. This chain is Fructose-bisphosphate aldolase 2, chloroplastic, found in Pisum sativum (Garden pea).